We begin with the raw amino-acid sequence, 88 residues long: ATP synthase subunit c 2 (88 aa).

Helical transmembrane passes span 4 to 24 (FSWV…GTGI) and 53 to 73 (IGLA…MIIL).

Belongs to the ATPase C chain family. F-type ATPases have 2 components, F(1) - the catalytic core - and F(0) - the membrane proton channel. F(1) has five subunits: alpha(3), beta(3), gamma(1), delta(1), epsilon(1). F(0) has three main subunits: a(1), b(2) and c(10-14). The alpha and beta chains form an alternating ring which encloses part of the gamma chain. F(1) is attached to F(0) by a central stalk formed by the gamma and epsilon chains, while a peripheral stalk is formed by the delta and b chains.

Its subcellular location is the cell inner membrane. In terms of biological role, f(1)F(0) ATP synthase produces ATP from ADP in the presence of a proton or sodium gradient. F-type ATPases consist of two structural domains, F(1) containing the extramembraneous catalytic core and F(0) containing the membrane proton channel, linked together by a central stalk and a peripheral stalk. During catalysis, ATP synthesis in the catalytic domain of F(1) is coupled via a rotary mechanism of the central stalk subunits to proton translocation. Its function is as follows. Key component of the F(0) channel; it plays a direct role in translocation across the membrane. A homomeric c-ring of between 10-14 subunits forms the central stalk rotor element with the F(1) delta and epsilon subunits. In Syntrophotalea carbinolica (strain DSM 2380 / NBRC 103641 / GraBd1) (Pelobacter carbinolicus), this protein is ATP synthase subunit c 2.